The sequence spans 1183 residues: Translation initiation factor IF-2 (1183 aa).

Disordered stretches follow at residues K55–I512 and A538–R574. A compositionally biased stretch (basic and acidic residues) spans T83–T99. Composition is skewed to polar residues over residues E100–A143 and K165–S177. Residues P220–P229 are compositionally biased toward basic and acidic residues. Positions Q231–G252 are enriched in polar residues. The segment covering Q253–Q267 has biased composition (low complexity). A compositionally biased stretch (basic and acidic residues) spans I288 to N304. Polar residues-rich tracts occupy residues Q324 to G349 and N357 to G367. The segment covering G485–R499 has biased composition (basic and acidic residues). 2 stretches are compositionally biased toward basic residues: residues S544–N553 and L560–R574. Residues R675–L847 form the tr-type G domain. The interval G684–T691 is G1. G684–T691 lines the GTP pocket. The G2 stretch occupies residues G709 to H713. Positions D734–G737 are G3. GTP-binding positions include D734–H738 and N788–D791. The tract at residues N788–D791 is G4. Residues S824 to I826 form a G5 region.

The protein belongs to the TRAFAC class translation factor GTPase superfamily. Classic translation factor GTPase family. IF-2 subfamily.

The protein resides in the cytoplasm. One of the essential components for the initiation of protein synthesis. Protects formylmethionyl-tRNA from spontaneous hydrolysis and promotes its binding to the 30S ribosomal subunits. Also involved in the hydrolysis of GTP during the formation of the 70S ribosomal complex. This chain is Translation initiation factor IF-2, found in Prochlorococcus marinus (strain NATL1A).